The following is a 673-amino-acid chain: Poly(glycerol-phosphate) alpha-glucosyltransferase (673 aa).

Serine 2 is modified (phosphoserine).

It belongs to the glycosyltransferase group 1 family. Glycosyltransferase 4 subfamily.

The protein localises to the cytoplasm. It catalyses the reaction 4-O-{[(2R)-1-glycerylphospho](n)-(2R)-1-glycerylphospho}-N-acetyl-beta-D-mannosaminyl-(1-&gt;4)-N-acetyl-alpha-D-glucosaminyl undecaprenyl diphosphate + n UDP-alpha-D-glucose = 4-O-{[(2R)-2-alpha-D-glucosyl-1-glycerylphospho](n)-(2R)-1-glycerylphospho}-N-acetyl-beta-D-mannosaminyl-(1-&gt;4)-N-acetyl-alpha-D-glucosaminyl undecaprenyl diphosphate + n UDP + n H(+). It functions in the pathway cell wall biogenesis; poly(glycerol phosphate) teichoic acid biosynthesis. Functionally, catalyzes the addition of glucose to the C-2 hydroxy group of the glycerol units in teichoic acid. This Bacillus subtilis (strain 168) protein is Poly(glycerol-phosphate) alpha-glucosyltransferase (tagE).